A 539-amino-acid polypeptide reads, in one-letter code: GMP synthase [glutamine-hydrolyzing] (539 aa).

Residues 4–202 form the Glutamine amidotransferase type-1 domain; it reads KILILDFGSQ…VLQIAGAKPD (199 aa). The active-site Nucleophile is Cys-81. Residues His-176 and Glu-178 contribute to the active site. A GMPS ATP-PPase domain is found at 203-395; the sequence is WIMSNHIEEA…LGLPPEMVYR (193 aa). 230-236 contacts ATP; the sequence is SGGVDSS.

In terms of assembly, homodimer.

It catalyses the reaction XMP + L-glutamine + ATP + H2O = GMP + L-glutamate + AMP + diphosphate + 2 H(+). It functions in the pathway purine metabolism; GMP biosynthesis; GMP from XMP (L-Gln route): step 1/1. Its function is as follows. Catalyzes the synthesis of GMP from XMP. The sequence is that of GMP synthase [glutamine-hydrolyzing] from Burkholderia ambifaria (strain ATCC BAA-244 / DSM 16087 / CCUG 44356 / LMG 19182 / AMMD) (Burkholderia cepacia (strain AMMD)).